Reading from the N-terminus, the 423-residue chain is MVXXKTLEPKFFQSLLDNSPTPYHLVNYIEEKLINYFNAQQLKLNEKWKIKTGSYYIKKEGTSLIAFNIDVKKKYEPFLIAAAHTDSPGLKLKIDATEKVSGVFYNHIEVYGSPIISTWIDRDLSLAGIVYFKKNENIESKLINIENIGIIPNLAIHLNRQINEGFKYNAHDNLTVISSTKKAIKDNILEQLGIECENFLSCDLIFTESQPSKIIGTEGEFLASKNLDNKSGCHAIMNSYVHTSNDKNKIAVFFDNEEVGSLTSRGADSNFLSEVLERIDIALDLTREEHLIKTNKSFNISIDSVHGIHPGYTSKHDPNYQANLGKGVVVKNSANFRYATTSTGFAKLKNLAIKNNIKIQEIIMKANVPSGTTIGPISNARTGIETIDIGTPMWAMHSLRETVSIADHIEAIKLLRAFFEKGI.

3 residues coordinate Zn(2+): histidine 84, histidine 157, and histidine 397.

The protein belongs to the peptidase M18 family. It depends on Zn(2+) as a cofactor.

The polypeptide is Probable M18 family aminopeptidase 2 (apeB) (Borreliella burgdorferi (strain ATCC 35210 / DSM 4680 / CIP 102532 / B31) (Borrelia burgdorferi)).